We begin with the raw amino-acid sequence, 407 residues long: Phosphoglycerate kinase (407 aa).

Substrate contacts are provided by residues 21 to 23 (DLN), Arg36, 59 to 62 (HQGR), Arg116, and Arg156. ATP contacts are provided by residues Glu332 and 358–361 (GGDT).

Belongs to the phosphoglycerate kinase family. As to quaternary structure, monomer.

Its subcellular location is the cytoplasm. The catalysed reaction is (2R)-3-phosphoglycerate + ATP = (2R)-3-phospho-glyceroyl phosphate + ADP. The protein operates within carbohydrate degradation; glycolysis; pyruvate from D-glyceraldehyde 3-phosphate: step 2/5. The polypeptide is Phosphoglycerate kinase (Halorubrum lacusprofundi (strain ATCC 49239 / DSM 5036 / JCM 8891 / ACAM 34)).